A 398-amino-acid chain; its full sequence is Lipase member N (398 aa).

The signal sequence occupies residues 1–18 (MMWLLLTTTCLICGTLNA). Residues 79–379 (PVVYMQHALF…DWNHFDFVWG (301 aa)) enclose the AB hydrolase-1 domain. Residue Ser-173 is the Nucleophile of the active site. An intrachain disulfide couples Cys-247 to Cys-256. Asn-272 carries an N-linked (GlcNAc...) asparagine glycan. Residues Asp-344 and His-373 each act as charge relay system in the active site.

It belongs to the AB hydrolase superfamily. Lipase family. Highly expressed in the epidermis in the granular keratinocytes. Also detected in other tissues, although at much lower levels, including lung and spleen.

Its subcellular location is the secreted. The catalysed reaction is a sterol ester + H2O = a sterol + a fatty acid + H(+). It catalyses the reaction a triacylglycerol + H2O = a 1,2-diacylglycerol + a fatty acid + H(+). It carries out the reaction a triacylglycerol + H2O = a diacylglycerol + a fatty acid + H(+). The enzyme catalyses a cholesterol ester + H2O = cholesterol + a fatty acid + H(+). Plays a highly specific role in the last step of keratinocyte differentiation. Contains two distinct domains: the alpha/beta hydrolase fold and the abhydrolase-associated lipase region, also features the consensus sequence of the active site of a genuine lipase. May have an essential function in lipid metabolism of the most differentiated epidermal layers. This Homo sapiens (Human) protein is Lipase member N (LIPN).